The following is a 275-amino-acid chain: Lincomycin biosynthesis protein LmbN (275 aa).

The region spanning 1–78 (MSTLDEVLAL…AIAATVARIT (78 aa)) is the Carrier domain. At S37 the chain carries O-(pantetheine 4'-phosphoryl)serine. An SIS domain is found at 113–275 (LFDTWHAGGT…HHALCVAHAP (163 aa)).

The protein operates within antibiotic biosynthesis; lincomycin biosynthesis. The polypeptide is Lincomycin biosynthesis protein LmbN (lmbN) (Streptomyces lincolnensis).